A 498-amino-acid chain; its full sequence is AP2-like ethylene-responsive transcription factor AIL7 (498 aa).

The segment covering 186 to 195 has biased composition (polar residues); the sequence is TSDQPLSCNN. A disordered region spans residues 186–220; the sequence is TSDQPLSCNNGERGGNSNKKKTVSKKETSDDSKKK. The segment covering 209–220 has biased composition (basic and acidic residues); that stretch reads SKKETSDDSKKK. 2 DNA-binding regions (AP2/ERF) span residues 231–297 and 333–391; these read IYRG…TNFP and IYRG…TNFE. The span at 422–451 shows a compositional bias: low complexity; that stretch reads ESPSSSSSDHNLQQQQLLPSSSPSDQNPNS. Residues 422-452 are disordered; it reads ESPSSSSSDHNLQQQQLLPSSSPSDQNPNSI.

This sequence belongs to the AP2/ERF transcription factor family. AP2 subfamily. In terms of assembly, interacts with HDG2, and possibly with HDG3, HDG7, ANL2, ATML1 and PDF2. As to expression, expressed in roots, seedlings, inflorescence, and siliques. Also detected at low levels in leaves.

It localises to the nucleus. Its function is as follows. Probably acts as a transcriptional activator. Binds to the GCC-box pathogenesis-related promoter element. May be involved in the regulation of gene expression by stress factors and by components of stress signal transduction pathways. The sequence is that of AP2-like ethylene-responsive transcription factor AIL7 from Arabidopsis thaliana (Mouse-ear cress).